The following is a 320-amino-acid chain: MIFSTLEHILTHISFSIVSIVITIHLITLLVDEIIKLYDSSEKGMIAIFLCITGLLVTRWIYSRHFPLSDLYESLIFLSWSLSVIHIVPYFKKKKKNLSTITASSVIFTQGFATSGLLTEIHQSAILVPALQSEWLIMHVSMMILSYAALLCGSLLSVALLVITFRKNRNIFCKRNPLLNELFSFGEIQYMNERNNVLRTTFFSAKNYYRSQLIQQLDYWSYRVISLGFIFLTIGILSGAVWANEAWGSYWNWDPKETWAFITWIVFAIYLHTRTNIKLRGANSAIVASIGFLIIWICYFGVNLLGIGLHSYGSFTLTSN.

A run of 8 helical transmembrane segments spans residues 15–35, 43–63, 71–91, 98–118, 143–163, 224–244, 251–271, and 285–305; these read FSIV…DEII, KGMI…WIYS, LYES…VPYF, LSTI…SGLL, MILS…LLVI, VISL…VWAN, WNWD…AIYL, and AIVA…VNLL.

This sequence belongs to the CcmF/CycK/Ccl1/NrfE/CcsA family. As to quaternary structure, may interact with Ccs1.

It localises to the plastid. The protein resides in the chloroplast thylakoid membrane. In terms of biological role, required during biogenesis of c-type cytochromes (cytochrome c6 and cytochrome f) at the step of heme attachment. In Panax ginseng (Korean ginseng), this protein is Cytochrome c biogenesis protein CcsA.